Here is a 505-residue protein sequence, read N- to C-terminus: Maturase K (505 aa).

This sequence belongs to the intron maturase 2 family. MatK subfamily.

It localises to the plastid. The protein localises to the chloroplast. Its function is as follows. Usually encoded in the trnK tRNA gene intron. Probably assists in splicing its own and other chloroplast group II introns. The protein is Maturase K of Froelichia floridana (Florida snake-cotton).